Here is a 646-residue protein sequence, read N- to C-terminus: Lamin-1 (646 aa).

The segment at 1–85 (MAEKAGEAGV…GSRATSPTSF (85 aa)) is head. Residues 1-94 (MAEKAGEAGV…FSRAQEKEEL (94 aa)) are disordered. Composition is skewed to polar residues over residues 48–67 (ATPS…SMSL) and 75–87 (QGSR…SFSR). Residues 86–126 (SRAQEKEELQNLNDRLAKILNKLNDSEEENRTLKIRLTTVQ) form a coil 1A region. One can recognise an IF rod domain in the interval 90 to 446 (EKEELQNLND…KLLSDEEIRL (357 aa)). The interval 127 to 137 (QETSADLNDQI) is linker 1. A coil 1B region spans residues 138–281 (GKYRDELERA…SKLQRQSLSV (144 aa)). Positions 281-301 (VTTVDHHSAQSTSRRSGSDFS) are enriched in polar residues. The interval 281–304 (VTTVDHHSAQSTSRRSGSDFSASV) is disordered. The linker 2 stretch occupies residues 282-299 (TTVDHHSAQSTSRRSGSD). The tract at residues 300-439 (FSASVEDMRS…TELEMYNKLL (140 aa)) is coil 2. Residues 440–646 (SDEEIRLGIT…GKGILGFFGL (207 aa)) form a tail region. A Nuclear localization signal motif is present at residues 457–471 (VRHGAKKRKLTETFY). The span at 476–487 (GSRSSAGSRSAG) shows a compositional bias: low complexity. Residues 476–513 (GSRSSAGSRSAGHNSTPVTKSQVTRTTVKTSENKSKAS) form a disordered region. The segment covering 488–505 (HNSTPVTKSQVTRTTVKT) has biased composition (polar residues). An LTD domain is found at 504–618 (KTSENKSKAS…NQMATYEVSA (115 aa)).

This sequence belongs to the intermediate filament family.

The protein resides in the nucleus. Functionally, intermediate filament (IF) protein, component of the nuclear lamina, a fibrous layer on the nucleoplasmic side of the inner nuclear membrane, which is thought to provide a framework for the nuclear envelope. In Hypsibius exemplaris (Freshwater tardigrade), this protein is Lamin-1.